Consider the following 472-residue polypeptide: NADH-quinone oxidoreductase subunit N (472 aa).

The next 14 membrane-spanning stretches (helical) occupy residues 5 to 25 (LLTTEMLTALLGIGLLAIGLL), 36 to 56 (AYAAVFGLLGILVVTFFQYGI), 77 to 97 (IFLVAAILVILSAIDYVDGLP), 103 to 123 (FYALLVFATLGMMVMASANDL), 126 to 146 (LYVGMELMTITFFILVAYILG), 158 to 178 (LLLGGASSAVLLYGLSLLYGL), 197 to 217 (LAIAVVTIIAGFGFKISAVPF), 229 to 249 (PTPVTGFLAAASKAAGFAVLV), 264 to 284 (WLTVIAVLAGVTMVIGNVVAI), 292 to 309 (MLAYSSVAQAGYLLVGLM), 319 to 339 (ILFYAMLYVVANMGAFAVATA), 363 to 383 (ASVMTISLLSLAGIPPLAGFV), 396 to 416 (GVLWPAFLGFVMSMVSVYYYL), and 441 to 461 (LTVIFSMVVTVILGIYPGPLA).

The protein belongs to the complex I subunit 2 family. NDH-1 is composed of 14 different subunits. Subunits NuoA, H, J, K, L, M, N constitute the membrane sector of the complex.

It is found in the cell membrane. The catalysed reaction is a quinone + NADH + 5 H(+)(in) = a quinol + NAD(+) + 4 H(+)(out). Its function is as follows. NDH-1 shuttles electrons from NADH, via FMN and iron-sulfur (Fe-S) centers, to quinones in the respiratory chain. The immediate electron acceptor for the enzyme in this species is believed to be a menaquinone. Couples the redox reaction to proton translocation (for every two electrons transferred, four hydrogen ions are translocated across the cytoplasmic membrane), and thus conserves the redox energy in a proton gradient. This chain is NADH-quinone oxidoreductase subunit N, found in Heliobacterium modesticaldum (strain ATCC 51547 / Ice1).